A 416-amino-acid chain; its full sequence is GTPase Obg (416 aa).

The Obg domain occupies 1–157 (MFQDVLVITV…RRLRLELMLI (157 aa)). Disordered regions lie at residues 25–44 (EKFV…GGSV) and 62–82 (TYKA…RGGE). Residues 32–42 (GPDGGDGGRGG) show a composition bias toward gly residues. Residues 63-72 (YKAEDGEHGR) are compositionally biased toward basic and acidic residues. Positions 158-324 (ADVGLVGYPN…LKEALHALVR (167 aa)) constitute an OBG-type G domain. Residues 164 to 171 (GYPNAGKS), 189 to 193 (FTTLS), 211 to 214 (DIPG), 277 to 280 (NKVD), and 305 to 307 (SAL) contribute to the GTP site. Mg(2+) is bound by residues S171 and T191. Residues 336–414 (PRKEVQAGVE…IGGLEFEYIP (79 aa)) enclose the OCT domain.

It belongs to the TRAFAC class OBG-HflX-like GTPase superfamily. OBG GTPase family. In terms of assembly, monomer. Requires Mg(2+) as cofactor.

It is found in the cytoplasm. Functionally, an essential GTPase which binds GTP, GDP and possibly (p)ppGpp with moderate affinity, with high nucleotide exchange rates and a fairly low GTP hydrolysis rate. Plays a role in control of the cell cycle, stress response, ribosome biogenesis and in those bacteria that undergo differentiation, in morphogenesis control. The chain is GTPase Obg from Thermus thermophilus (strain ATCC BAA-163 / DSM 7039 / HB27).